The chain runs to 284 residues: Acetylglutamate kinase (284 aa).

Residues 66 to 67 (GG), R88, and N179 contribute to the substrate site.

This sequence belongs to the acetylglutamate kinase family. ArgB subfamily.

The protein localises to the cytoplasm. It catalyses the reaction N-acetyl-L-glutamate + ATP = N-acetyl-L-glutamyl 5-phosphate + ADP. It participates in amino-acid biosynthesis; L-arginine biosynthesis; N(2)-acetyl-L-ornithine from L-glutamate: step 2/4. Its function is as follows. Catalyzes the ATP-dependent phosphorylation of N-acetyl-L-glutamate. This Actinobacillus pleuropneumoniae serotype 7 (strain AP76) protein is Acetylglutamate kinase.